A 654-amino-acid polypeptide reads, in one-letter code: Probable potassium transport system protein Kup (654 aa).

A run of 13 helical transmembrane segments spans residues 17–37 (GILV…LYVM), 40–60 (IIGL…AIFW), 71–91 (VLIT…LYAL), 99–119 (WLII…IITP), 137–157 (INTV…QQFG), 164–184 (FFAP…ILQI), 202–222 (LLSI…CTTG), 240–260 (ISWI…GAYL), 281–301 (LVMP…AAVI), 338–358 (IYIP…VLHF), 369–389 (GLAI…FMIL), 394–414 (WFII…FLIA), and 423–443 (GYVT…WYTA).

Belongs to the HAK/KUP transporter (TC 2.A.72) family.

Its subcellular location is the cell inner membrane. The enzyme catalyses K(+)(in) + H(+)(in) = K(+)(out) + H(+)(out). In terms of biological role, transport of potassium into the cell. Likely operates as a K(+):H(+) symporter. This is Probable potassium transport system protein Kup from Flavobacterium psychrophilum (strain ATCC 49511 / DSM 21280 / CIP 103535 / JIP02/86).